The following is a 152-amino-acid chain: Interleukin-3 (152 aa).

An N-terminal signal peptide occupies residues 1-19; the sequence is MSCLPVLLLLQLLVSPGLQ. N-linked (GlcNAc...) asparagine glycans are attached at residues Asn-34 and Asn-89. The cysteines at positions 35 and 103 are disulfide-linked.

It belongs to the IL-3 family. As to quaternary structure, monomer. As to expression, activated T-cells, mast cells, natural killer cells.

It localises to the secreted. Functionally, granulocyte/macrophage colony-stimulating factors are cytokines that act in hematopoiesis by controlling the production, differentiation, and function of 2 related white cell populations of the blood, the granulocytes and the monocytes-macrophages. This CSF induces granulocytes, macrophages, mast cells, stem cells, erythroid cells, eosinophils and megakaryocytes. The chain is Interleukin-3 (IL3) from Hylobates lar (Lar gibbon).